The chain runs to 248 residues: Probable transcriptional regulatory protein Pfl01_4410 (248 aa).

The protein belongs to the TACO1 family.

It is found in the cytoplasm. The chain is Probable transcriptional regulatory protein Pfl01_4410 from Pseudomonas fluorescens (strain Pf0-1).